Reading from the N-terminus, the 388-residue chain is Gastricsin (388 aa).

The first 16 residues, 1–16, serve as a signal peptide directing secretion; it reads MKWLLVALVCLHLLEA. Residues 17–59 constitute a propeptide, activation peptide; it reads AVIKVPLRKFKSIRETLKEKGLLKEFLNTHKYDPALKYRFGDF. Residues 73–385 enclose the Peptidase A1 domain; it reads YFGEISIGTP…DMANNRVGFA (313 aa). D91 is a catalytic residue. Cystine bridges form between C104-C109 and C267-C271. Residue D276 is part of the active site. A disulfide bridge connects residues C310 and C343.

The protein belongs to the peptidase A1 family.

It localises to the secreted. The enzyme catalyses More restricted specificity than pepsin A, but shows preferential cleavage at Tyr-|-Xaa bonds. High activity on hemoglobin.. Hydrolyzes a variety of proteins. The chain is Gastricsin (PGC) from Oryctolagus cuniculus (Rabbit).